Here is a 352-residue protein sequence, read N- to C-terminus: Anthranilate phosphoribosyltransferase (352 aa).

5-phospho-alpha-D-ribose 1-diphosphate-binding positions include Gly-91, 94–95 (GD), Thr-99, 101–104 (NIST), 119–127 (KHGNRASSS), and Ser-131. An anthranilate-binding site is contributed by Gly-91. Position 103 (Ser-103) interacts with Mg(2+). Residue Asn-122 participates in anthranilate binding. Residue Arg-177 participates in anthranilate binding. Mg(2+) is bound by residues Asp-235 and Glu-236.

It belongs to the anthranilate phosphoribosyltransferase family. As to quaternary structure, homodimer. Requires Mg(2+) as cofactor.

It catalyses the reaction N-(5-phospho-beta-D-ribosyl)anthranilate + diphosphate = 5-phospho-alpha-D-ribose 1-diphosphate + anthranilate. It participates in amino-acid biosynthesis; L-tryptophan biosynthesis; L-tryptophan from chorismate: step 2/5. Its function is as follows. Catalyzes the transfer of the phosphoribosyl group of 5-phosphorylribose-1-pyrophosphate (PRPP) to anthranilate to yield N-(5'-phosphoribosyl)-anthranilate (PRA). The sequence is that of Anthranilate phosphoribosyltransferase from Arthrobacter sp. (strain FB24).